Consider the following 231-residue polypeptide: Heptaprenylglyceryl phosphate synthase (231 aa).

A sn-glycerol 1-phosphate-binding site is contributed by Lys-12. The Mg(2+) site is built by Asp-14 and Thr-40. Sn-glycerol 1-phosphate is bound by residues Tyr-159–Gly-164, Gly-189, and Gly-209–Asn-210.

Belongs to the GGGP/HepGP synthase family. Group I subfamily. Homodimer. It depends on Mg(2+) as a cofactor.

The enzyme catalyses sn-glycerol 1-phosphate + all-trans-heptaprenyl diphosphate = 3-heptaprenyl-sn-glycero-1-phosphate + diphosphate. It participates in membrane lipid metabolism; glycerophospholipid metabolism. In terms of biological role, prenyltransferase that catalyzes in vivo the transfer of the heptaprenyl moiety of heptaprenyl pyrophosphate (HepPP; 35 carbon atoms) to the C3 hydroxyl of sn-glycerol-1-phosphate (G1P), producing heptaprenylglyceryl phosphate (HepGP). This reaction is an ether-bond-formation step in the biosynthesis of archaea-type G1P-based membrane lipids found in Bacillales. The protein is Heptaprenylglyceryl phosphate synthase of Brevibacillus brevis (strain 47 / JCM 6285 / NBRC 100599).